Consider the following 277-residue polypeptide: Antigen 1 (277 aa).

The signal sequence occupies residues methionine 1–alanine 16. N-linked (GlcNAc...) asparagine glycosylation is found at asparagine 41, asparagine 71, asparagine 127, and asparagine 200. A disordered region spans residues cysteine 230–threonine 277. A compositionally biased stretch (acidic residues) spans glycine 233–proline 263. Residues glutamate 264–threonine 277 show a composition bias toward basic and acidic residues.

This sequence belongs to the ZPS1 family.

In Emericella nidulans (strain FGSC A4 / ATCC 38163 / CBS 112.46 / NRRL 194 / M139) (Aspergillus nidulans), this protein is Antigen 1 (aspnd1).